The primary structure comprises 104 residues: Large ribosomal subunit protein uL24 (104 aa).

Belongs to the universal ribosomal protein uL24 family. As to quaternary structure, part of the 50S ribosomal subunit.

Its function is as follows. One of two assembly initiator proteins, it binds directly to the 5'-end of the 23S rRNA, where it nucleates assembly of the 50S subunit. In terms of biological role, one of the proteins that surrounds the polypeptide exit tunnel on the outside of the subunit. This Maricaulis maris (strain MCS10) (Caulobacter maris) protein is Large ribosomal subunit protein uL24.